The sequence spans 613 residues: Spastin (613 aa).

The interval 1-42 (MNSPGGRGKKKGSAGSSSAPPAAGASPSAPSGPAPPAPPAGA) is disordered. Residues 1–61 (MNSPGGRGKK…KRNLYYFSYP (61 aa)) lie on the Cytoplasmic side of the membrane. The span at 13–29 (SAGSSSAPPAAGASPSA) shows a compositional bias: low complexity. The span at 30-39 (PSGPAPPAPP) shows a compositional bias: pro residues. The helical intramembrane region spans 62–82 (LFAAFALLRFVAFQLGLLVAW). At 83 to 613 (LCERLSRGAL…WNKDFGDTTV (531 aa)) the chain is on the cytoplasmic side. An MIT domain is found at 117–192 (HKRAFECISM…AMAKDRLQLL (76 aa)). Residues 224 to 312 (SESGAVPKKK…PAARKKKDTK (89 aa)) are disordered. Composition is skewed to polar residues over residues 237–257 (THTSNSLPRSKTVAKTGSTGL), 264–274 (PSYSGISTASV), and 281–299 (PATSTHKAAPKNSRTNKPS). 379–386 (GPPGNGKT) is a binding site for ATP.

The protein belongs to the AAA ATPase family. Spastin subfamily. In terms of assembly, homohexamer. The homohexamer is stabilized by ATP-binding. The homohexamer may adopt a ring conformation through which microtubules pass prior to being severed. Interacts with microtubules.

The protein resides in the membrane. The protein localises to the cytoplasm. Its subcellular location is the cytoskeleton. It is found in the microtubule organizing center. It localises to the centrosome. The protein resides in the perinuclear region. The protein localises to the nucleus. The enzyme catalyses n ATP + n H2O + a microtubule = n ADP + n phosphate + (n+1) alpha/beta tubulin heterodimers.. ATP-dependent microtubule severing protein that specifically recognizes and cuts microtubules that are polyglutamylated. Preferentially recognizes and acts on microtubules decorated with short polyglutamate tails: severing activity increases as the number of glutamates per tubulin rises from one to eight, but decreases beyond this glutamylation threshold. Microtubule severing promotes reorganization of cellular microtubule arrays and the release of microtubules from the centrosome following nucleation. Required for membrane traffic from the endoplasmic reticulum (ER) to the Golgi and for completion of the abscission stage of cytokinesis. Also plays a role in axon growth and the formation of axonal branches. In Gallus gallus (Chicken), this protein is Spastin.